We begin with the raw amino-acid sequence, 999 residues long: Bifunctional glutamine synthetase adenylyltransferase/adenylyl-removing enzyme (999 aa).

The adenylyl removase stretch occupies residues Met1 to Leu493. Residues Gly498–Gly999 form an adenylyl transferase region.

The protein belongs to the GlnE family. Mg(2+) is required as a cofactor.

The catalysed reaction is [glutamine synthetase]-O(4)-(5'-adenylyl)-L-tyrosine + phosphate = [glutamine synthetase]-L-tyrosine + ADP. It carries out the reaction [glutamine synthetase]-L-tyrosine + ATP = [glutamine synthetase]-O(4)-(5'-adenylyl)-L-tyrosine + diphosphate. In terms of biological role, involved in the regulation of glutamine synthetase GlnA, a key enzyme in the process to assimilate ammonia. When cellular nitrogen levels are high, the C-terminal adenylyl transferase (AT) inactivates GlnA by covalent transfer of an adenylyl group from ATP to specific tyrosine residue of GlnA, thus reducing its activity. Conversely, when nitrogen levels are low, the N-terminal adenylyl removase (AR) activates GlnA by removing the adenylyl group by phosphorolysis, increasing its activity. The regulatory region of GlnE binds the signal transduction protein PII (GlnB) which indicates the nitrogen status of the cell. This chain is Bifunctional glutamine synthetase adenylyltransferase/adenylyl-removing enzyme, found in Mycolicibacterium smegmatis (strain ATCC 700084 / mc(2)155) (Mycobacterium smegmatis).